Here is a 540-residue protein sequence, read N- to C-terminus: Hydroxylamine reductase (540 aa).

Cys-3, Cys-6, Cys-15, and Cys-21 together coordinate [4Fe-4S] cluster. His-236, Glu-260, Cys-304, Cys-395, Cys-423, Cys-448, Glu-483, and Lys-485 together coordinate hybrid [4Fe-2O-2S] cluster. The residue at position 395 (Cys-395) is a Cysteine persulfide.

This sequence belongs to the HCP family. Requires [4Fe-4S] cluster as cofactor. Hybrid [4Fe-2O-2S] cluster is required as a cofactor.

It is found in the cytoplasm. It carries out the reaction A + NH4(+) + H2O = hydroxylamine + AH2 + H(+). Its function is as follows. Catalyzes the reduction of hydroxylamine to form NH(3) and H(2)O. In Methanosarcina mazei (strain ATCC BAA-159 / DSM 3647 / Goe1 / Go1 / JCM 11833 / OCM 88) (Methanosarcina frisia), this protein is Hydroxylamine reductase.